The sequence spans 510 residues: Protein ERGIC-53 (510 aa).

Positions 1–30 are cleaved as a signal peptide; sequence MAGSRQRGLRARVRPLFCALLLSLGRFVRG. The Lumenal segment spans residues 31-477; that stretch reads DGVGGDPAVA…ELPPFPSCLS (447 aa). An L-type lectin-like domain is found at 44–267; the sequence is RRFEYKYSFK…DVLSFLTFQL (224 aa). Ser88 and Asp121 together coordinate a carbohydrate. Asp152, Phe154, and Asn156 together coordinate Ca(2+). The a carbohydrate site is built by Asn156 and His178. A Ca(2+)-binding site is contributed by Asp181. Cys190 and Cys230 form a disulfide bridge. 251–253 lines the a carbohydrate pocket; it reads GGL. Position 425 is a phosphoserine (Ser425). The helical transmembrane segment at 478-498 threads the bilayer; sequence TVHFIIFVVVQTVLFIGYIMY. Over 499 to 510 the chain is Cytoplasmic; the sequence is RSQQEAAAKKFF. Residues 499 to 510 form a mediates interaction with RAB3GAP1, RAB3GAP2 and UBXN6 region; that stretch reads RSQQEAAAKKFF. Residues 509–510 carry the ER export motif motif; the sequence is FF.

In terms of assembly, exists both as a covalent disulfide-linked homohexamer, and a complex of three disulfide-linked dimers non-covalently kept together. Interacts with MCFD2. May interact with TMEM115. Interacts with RAB3GAP1 and RAB3GAP2. Interacts with UBXN6. Interacts with SERPINA1/alpha1-antitrypsin. Interacts with BET1. The N-terminal may be partly blocked. As to expression, ubiquitous.

The protein resides in the endoplasmic reticulum-Golgi intermediate compartment membrane. Its subcellular location is the golgi apparatus membrane. The protein localises to the endoplasmic reticulum membrane. In terms of biological role, mannose-specific lectin. May recognize sugar residues of glycoproteins, glycolipids, or glycosylphosphatidyl inositol anchors and may be involved in the sorting or recycling of proteins, lipids, or both. The LMAN1-MCFD2 complex forms a specific cargo receptor for the ER-to-Golgi transport of selected proteins. The protein is Protein ERGIC-53 (LMAN1) of Homo sapiens (Human).